The chain runs to 512 residues: Mesoderm induction early response protein 1 (512 aa).

The span at 1–16 (MAEPSVESSSPGGSAT) shows a compositional bias: low complexity. Disordered regions lie at residues 1–63 (MAEP…REGD) and 75–173 (YGST…EDYI). S10 is subject to Phosphoserine. Basic and acidic residues predominate over residues 17-36 (SDDHEFDPSADMLVHDFDDE). Acidic residues-rich tracts occupy residues 37–46 (RTLEEEEMME) and 83–105 (EEDEEEEEEEEEGEDDEDADNDD). A compositionally biased stretch (polar residues) spans 129–144 (QSSNDDPSQSVASQDA). S141 carries the phosphoserine modification. Y155 carries the post-translational modification Phosphotyrosine. Phosphoserine occurs at positions 160 and 166. Residues 160 to 173 (SEVEEESEEDEDYI) show a composition bias toward acidic residues. The region spanning 180–278 (KEIMVGSMFQ…EALRRLRFNV (99 aa)) is the ELM2 domain. An interaction with HDAC1 region spans residues 180 to 284 (KEIMVGSMFQ…RFNVKAAREE (105 aa)). A Glycyl lysine isopeptide (Lys-Gly) (interchain with G-Cter in SUMO2) cross-link involves residue K239. Residues 283-335 (EELSVWTEEECRNFEQGLKAYGKDFHLIQANKVRTRSVGECVAFYYMWKKSER) enclose the SANT domain. The interval 366-512 (ESESAASSRA…KFEELENTDD (147 aa)) is disordered. Residues S367, S369, and S377 each carry the phosphoserine modification. Over residues 396 to 409 (TVSTTNQNGVSSNG) the composition is skewed to polar residues. The span at 414–423 (LNKEEVKVEG) shows a compositional bias: basic and acidic residues. Residue K420 forms a Glycyl lysine isopeptide (Lys-Gly) (interchain with G-Cter in SUMO2) linkage. T448 carries the post-translational modification Phosphothreonine. Residues 462–475 (ARNENDFDEKSERP) are compositionally biased toward basic and acidic residues. Positions 482–494 (NSNGKESPGSSEF) are enriched in polar residues. Phosphoserine is present on residues S483, S488, and S491.

Interacts with HDAC1. Part of a complex containing at least CDYL, MIER1, MIER2, HDAC1 and HDAC2.

The protein localises to the nucleus. Functionally, transcriptional repressor regulating the expression of a number of genes including SP1 target genes. Probably functions through recruitment of HDAC1 a histone deacetylase involved in chromatin silencing. In Pongo abelii (Sumatran orangutan), this protein is Mesoderm induction early response protein 1 (MIER1).